The following is a 227-amino-acid chain: Cytochrome c oxidase subunit 2 (227 aa).

At 1–14 the chain is on the mitochondrial intermembrane side; it reads MAHPVQLGLQDATS. A helical membrane pass occupies residues 15–45; sequence PVMEELVTFHDHALMAMFLISFLILYALSAT. Over 46–59 the chain is Mitochondrial matrix; that stretch reads LTTKLTNTNITDAQ. Residues 60–87 form a helical membrane-spanning segment; the sequence is EMETIWTILPAVILVLIALPSLRILYMT. Residues 88 to 227 lie on the Mitochondrial intermembrane side of the membrane; that stretch reads DEINNPSFTI…IFEMGPVFTL (140 aa). Residues His-161, Cys-196, Glu-198, Cys-200, His-204, and Met-207 each contribute to the Cu cation site. Residue Glu-198 coordinates Mg(2+).

This sequence belongs to the cytochrome c oxidase subunit 2 family. In terms of assembly, component of the cytochrome c oxidase (complex IV, CIV), a multisubunit enzyme composed of 14 subunits. The complex is composed of a catalytic core of 3 subunits MT-CO1, MT-CO2 and MT-CO3, encoded in the mitochondrial DNA, and 11 supernumerary subunits COX4I, COX5A, COX5B, COX6A, COX6B, COX6C, COX7A, COX7B, COX7C, COX8 and NDUFA4, which are encoded in the nuclear genome. The complex exists as a monomer or a dimer and forms supercomplexes (SCs) in the inner mitochondrial membrane with NADH-ubiquinone oxidoreductase (complex I, CI) and ubiquinol-cytochrome c oxidoreductase (cytochrome b-c1 complex, complex III, CIII), resulting in different assemblies (supercomplex SCI(1)III(2)IV(1) and megacomplex MCI(2)III(2)IV(2)). Found in a complex with TMEM177, COA6, COX18, COX20, SCO1 and SCO2. Interacts with TMEM177 in a COX20-dependent manner. Interacts with COX20. Interacts with COX16. Cu cation serves as cofactor.

The protein resides in the mitochondrion inner membrane. The enzyme catalyses 4 Fe(II)-[cytochrome c] + O2 + 8 H(+)(in) = 4 Fe(III)-[cytochrome c] + 2 H2O + 4 H(+)(out). Component of the cytochrome c oxidase, the last enzyme in the mitochondrial electron transport chain which drives oxidative phosphorylation. The respiratory chain contains 3 multisubunit complexes succinate dehydrogenase (complex II, CII), ubiquinol-cytochrome c oxidoreductase (cytochrome b-c1 complex, complex III, CIII) and cytochrome c oxidase (complex IV, CIV), that cooperate to transfer electrons derived from NADH and succinate to molecular oxygen, creating an electrochemical gradient over the inner membrane that drives transmembrane transport and the ATP synthase. Cytochrome c oxidase is the component of the respiratory chain that catalyzes the reduction of oxygen to water. Electrons originating from reduced cytochrome c in the intermembrane space (IMS) are transferred via the dinuclear copper A center (CU(A)) of subunit 2 and heme A of subunit 1 to the active site in subunit 1, a binuclear center (BNC) formed by heme A3 and copper B (CU(B)). The BNC reduces molecular oxygen to 2 water molecules using 4 electrons from cytochrome c in the IMS and 4 protons from the mitochondrial matrix. This chain is Cytochrome c oxidase subunit 2 (MT-CO2), found in Theropithecus gelada (Gelada baboon).